A 438-amino-acid chain; its full sequence is tRNA wybutosine-synthesizing protein 2 homolog (438 aa).

Residues Ser-209, Lys-216, Glu-256, and 284-285 (DN) contribute to the S-adenosyl-L-methionine site.

The protein belongs to the class I-like SAM-binding methyltransferase superfamily. TRM5/TYW2 family.

It carries out the reaction 4-demethylwyosine(37) in tRNA(Phe) + S-adenosyl-L-methionine = 4-demethyl-7-[(3S)-3-amino-3-carboxypropyl]wyosine(37) in tRNA(Phe) + S-methyl-5'-thioadenosine + H(+). The protein operates within tRNA modification; wybutosine-tRNA(Phe) biosynthesis. S-adenosyl-L-methionine-dependent transferase that acts as a component of the wybutosine biosynthesis pathway. Wybutosine is a hyper modified guanosine with a tricyclic base found at the 3'-position adjacent to the anticodon of eukaryotic phenylalanine tRNA. Catalyzes the transfer of the alpha-amino-alpha-carboxypropyl (acp) group from S-adenosyl-L-methionine to the C-7 position of 4-demethylwyosine (imG-14) to produce wybutosine-86. The protein is tRNA wybutosine-synthesizing protein 2 homolog (TRMT12) of Bos taurus (Bovine).